A 294-amino-acid polypeptide reads, in one-letter code: Energy-coupling factor transporter ATP-binding protein EcfA1 (294 aa).

The ABC transporter domain occupies 27 to 260 (IEFENVYFAY…EERLLKMQLD (234 aa)). 60-67 (GHNGSGKS) contributes to the ATP binding site.

It belongs to the ABC transporter superfamily. Energy-coupling factor EcfA family. As to quaternary structure, forms a stable energy-coupling factor (ECF) transporter complex composed of 2 membrane-embedded substrate-binding proteins (S component), 2 ATP-binding proteins (A component) and 2 transmembrane proteins (T component).

Its subcellular location is the cell membrane. ATP-binding (A) component of a common energy-coupling factor (ECF) ABC-transporter complex. Unlike classic ABC transporters this ECF transporter provides the energy necessary to transport a number of different substrates. The chain is Energy-coupling factor transporter ATP-binding protein EcfA1 from Ureaplasma parvum serovar 3 (strain ATCC 700970).